We begin with the raw amino-acid sequence, 161 residues long: Putative pre-16S rRNA nuclease (161 aa).

The protein belongs to the YqgF nuclease family.

The protein resides in the cytoplasm. In terms of biological role, could be a nuclease involved in processing of the 5'-end of pre-16S rRNA. The sequence is that of Putative pre-16S rRNA nuclease from Rhodospirillum rubrum (strain ATCC 11170 / ATH 1.1.1 / DSM 467 / LMG 4362 / NCIMB 8255 / S1).